A 303-amino-acid polypeptide reads, in one-letter code: N-acetyl-D-glucosamine kinase (303 aa).

ATP is bound by residues 4 to 11 (GFDIGGTK) and 133 to 140 (GVGGGLIF). Zn(2+) contacts are provided by His-157, Cys-177, Cys-179, and Cys-184.

It belongs to the ROK (NagC/XylR) family. NagK subfamily.

The catalysed reaction is N-acetyl-D-glucosamine + ATP = N-acetyl-D-glucosamine 6-phosphate + ADP + H(+). Its pathway is cell wall biogenesis; peptidoglycan recycling. Its function is as follows. Catalyzes the phosphorylation of N-acetyl-D-glucosamine (GlcNAc) derived from cell-wall degradation, yielding GlcNAc-6-P. This is N-acetyl-D-glucosamine kinase from Escherichia coli O7:K1 (strain IAI39 / ExPEC).